Consider the following 60-residue polypeptide: Large ribosomal subunit protein bL32 (60 aa).

Positions Met1 to Asp60 are disordered. The segment covering Lys7–Arg16 has biased composition (basic residues). The segment covering Leu22–Lys31 has biased composition (polar residues).

It belongs to the bacterial ribosomal protein bL32 family.

In Francisella tularensis subsp. tularensis (strain SCHU S4 / Schu 4), this protein is Large ribosomal subunit protein bL32.